A 309-amino-acid chain; its full sequence is Spermatid maturation protein 1 (309 aa).

A helical membrane pass occupies residues 29 to 49 (VLLLLGLIICINISINIVTLL). The tract at residues 209 to 231 (PPPPSPEAPSHKNGGEGAVPEAE) is disordered. A coiled-coil region spans residues 259-285 (RIVYDARDMRRRLRELTREVEALSGCY).

It localises to the membrane. The protein resides in the cytoplasm. Its function is as follows. Required for proper cytoplasm removal during spermatogenesis. This chain is Spermatid maturation protein 1 (SPEM1), found in Homo sapiens (Human).